The primary structure comprises 508 residues: Bifunctional purine biosynthesis protein PurH (508 aa).

The MGS-like domain occupies 1–144 (MTRALLSVSD…KNFASVLPIV (144 aa)).

The protein belongs to the PurH family.

The catalysed reaction is (6R)-10-formyltetrahydrofolate + 5-amino-1-(5-phospho-beta-D-ribosyl)imidazole-4-carboxamide = 5-formamido-1-(5-phospho-D-ribosyl)imidazole-4-carboxamide + (6S)-5,6,7,8-tetrahydrofolate. The enzyme catalyses IMP + H2O = 5-formamido-1-(5-phospho-D-ribosyl)imidazole-4-carboxamide. It functions in the pathway purine metabolism; IMP biosynthesis via de novo pathway; 5-formamido-1-(5-phospho-D-ribosyl)imidazole-4-carboxamide from 5-amino-1-(5-phospho-D-ribosyl)imidazole-4-carboxamide (10-formyl THF route): step 1/1. The protein operates within purine metabolism; IMP biosynthesis via de novo pathway; IMP from 5-formamido-1-(5-phospho-D-ribosyl)imidazole-4-carboxamide: step 1/1. The sequence is that of Bifunctional purine biosynthesis protein PurH from Leuconostoc mesenteroides subsp. mesenteroides (strain ATCC 8293 / DSM 20343 / BCRC 11652 / CCM 1803 / JCM 6124 / NCDO 523 / NBRC 100496 / NCIMB 8023 / NCTC 12954 / NRRL B-1118 / 37Y).